Here is a 734-residue protein sequence, read N- to C-terminus: Photosystem I P700 chlorophyll a apoprotein A2 (734 aa).

8 helical membrane-spanning segments follow: residues 46-69, 135-158, 175-199, 273-291, 330-353, 369-395, 417-439, and 517-535; these read IFAS…FHVA, LYVG…LHLQ, LNHH…HVAI, MAHH…GHMY, LHFQ…QHMY, ASLY…IFFV, AIIS…LYVH, and FLVH…LILV. Residues cysteine 559 and cysteine 568 each contribute to the [4Fe-4S] cluster site. 2 helical membrane passes run 575 to 596 and 643 to 665; these read AFYL…YFHW and LSVW…MFLI. Chlorophyll a contacts are provided by histidine 654, methionine 662, and tyrosine 670. Phylloquinone is bound at residue tryptophan 671. A helical transmembrane segment spans residues 707–727; the sequence is LVGLTHFSVGYVLTYAAFLIA.

Belongs to the PsaA/PsaB family. The PsaA/B heterodimer binds the P700 chlorophyll special pair and subsequent electron acceptors. PSI consists of a core antenna complex that captures photons, and an electron transfer chain that converts photonic excitation into a charge separation. The eukaryotic PSI reaction center is composed of at least 11 subunits. It depends on P700 is a chlorophyll a/chlorophyll a' dimer, A0 is one or more chlorophyll a, A1 is one or both phylloquinones and FX is a shared 4Fe-4S iron-sulfur center. as a cofactor.

It localises to the plastid. It is found in the chloroplast thylakoid membrane. The enzyme catalyses reduced [plastocyanin] + hnu + oxidized [2Fe-2S]-[ferredoxin] = oxidized [plastocyanin] + reduced [2Fe-2S]-[ferredoxin]. PsaA and PsaB bind P700, the primary electron donor of photosystem I (PSI), as well as the electron acceptors A0, A1 and FX. PSI is a plastocyanin/cytochrome c6-ferredoxin oxidoreductase, converting photonic excitation into a charge separation, which transfers an electron from the donor P700 chlorophyll pair to the spectroscopically characterized acceptors A0, A1, FX, FA and FB in turn. Oxidized P700 is reduced on the lumenal side of the thylakoid membrane by plastocyanin or cytochrome c6. This Chlorella vulgaris (Green alga) protein is Photosystem I P700 chlorophyll a apoprotein A2.